The following is a 687-amino-acid chain: Immune inhibitor A (687 aa).

Over residues 1–12 (MKDAKADTKEKL) the composition is skewed to basic and acidic residues. A signal peptide (or 32) is located at residues 1-25 (MKDAKADTKEKLNQPATGTPAATGP). The interval 1 to 43 (MKDAKADTKEKLNQPATGTPAATGPVKGGLNGKVPTSPAKQKA) is disordered. The propeptide occupies 26–40 (VKGGLNGKVPTSPAK). H266 contributes to the Zn(2+) binding site. E267 is an active-site residue. H270 lines the Zn(2+) pocket.

The protein belongs to the peptidase M6 family. Zn(2+) is required as a cofactor. It depends on Ca(2+) as a cofactor.

The protein resides in the secreted. Functionally, neutral metalloprotease that is secreted to degrade antibacterial proteins produced by the insect host for its defense (attacins and cecropins). Probably degrades some unknown crucial protein(s) too, since it is toxic when injected to insect larvae. The polypeptide is Immune inhibitor A (ina) (Bacillus thuringiensis subsp. alesti).